A 468-amino-acid polypeptide reads, in one-letter code: 3-isopropylmalate dehydratase large subunit (468 aa).

Residues Cys-349, Cys-409, and Cys-412 each coordinate [4Fe-4S] cluster.

It belongs to the aconitase/IPM isomerase family. LeuC type 1 subfamily. As to quaternary structure, heterodimer of LeuC and LeuD. [4Fe-4S] cluster serves as cofactor.

The catalysed reaction is (2R,3S)-3-isopropylmalate = (2S)-2-isopropylmalate. It functions in the pathway amino-acid biosynthesis; L-leucine biosynthesis; L-leucine from 3-methyl-2-oxobutanoate: step 2/4. In terms of biological role, catalyzes the isomerization between 2-isopropylmalate and 3-isopropylmalate, via the formation of 2-isopropylmaleate. This chain is 3-isopropylmalate dehydratase large subunit, found in Nitrobacter winogradskyi (strain ATCC 25391 / DSM 10237 / CIP 104748 / NCIMB 11846 / Nb-255).